Here is a 269-residue protein sequence, read N- to C-terminus: MKSILENRPALAKEVNKVAEVAGYLWQKGWAERNGGNITVNITEFVDDEIRRMEPISEVKSIGVTLPYLKGCYFYCKGTNKRMRDLARWPMENGSVIRILDDCASYVIIADEAVAPTSELPSHLSVHNDLLSKNSPYKASVHTHPIELIAMTHCEKFLQKDVATNLLWSMIPETKAFCPRGLGIIPYKLPSSVELAEATIKELQDYDVVMWEKHGVFAVDCDAMQAFDQIDVLNKSALIYIAAKNMGFEPDGMSQEQMKEMSVAFNLPK.

Glu-119 is an active-site residue. Zn(2+) is bound by residues His-142, His-144, and His-214.

It belongs to the aldolase class II family. RhaD subfamily. Zn(2+) serves as cofactor.

The protein localises to the cytoplasm. It catalyses the reaction L-rhamnulose 1-phosphate = (S)-lactaldehyde + dihydroxyacetone phosphate. The protein operates within carbohydrate degradation; L-rhamnose degradation; glycerone phosphate from L-rhamnose: step 3/3. In terms of biological role, catalyzes the reversible cleavage of L-rhamnulose-1-phosphate to dihydroxyacetone phosphate (DHAP) and L-lactaldehyde. In Bacteroides thetaiotaomicron (strain ATCC 29148 / DSM 2079 / JCM 5827 / CCUG 10774 / NCTC 10582 / VPI-5482 / E50), this protein is Rhamnulose-1-phosphate aldolase.